A 537-amino-acid chain; its full sequence is Ceramide kinase (537 aa).

The essential for enzyme activity stretch occupies residues 1–115 (MGATGAAEPL…CPEEQLCHLW (115 aa)). A required for binding to sulfatide and phosphoinositides region spans residues 1–125 (MGATGAAEPL…LQTLREMLEK (125 aa)). Residues 128 to 278 (SRPKHLLVFI…MDVSSVHHNS (151 aa)) form the DAGKc domain. ATP-binding positions include 138–140 (NPF) and 170–174 (TEHAN). 195–198 (GGDG) serves as a coordination point for substrate. The active-site Proton donor/acceptor is D197. ATP is bound by residues E202, 239–241 (GST), R304, and R310. Phosphoserine occurs at positions 340 and 408. 502-504 (DGE) is an ATP binding site.

Requires Ca(2+) as cofactor. It depends on Mg(2+) as a cofactor. High level expression in heart, brain, skeletal muscle, kidney and liver; moderate in peripheral blood leukocytes and thymus; very low in spleen, small intestine, placenta and lung.

It localises to the cytoplasm. The protein resides in the cell membrane. The enzyme catalyses an N-acylsphing-4-enine + ATP = an N-acylsphing-4-enine 1-phosphate + ADP + H(+). The catalysed reaction is N-(hexanoyl)sphing-4-enine + ATP = N-hexanoylsphing-4-enine 1-phosphate + ADP + H(+). It catalyses the reaction N-(acetyl)-sphing-4-enine + ATP = N-(acetyl)-sphing-4-enine-1-phosphate + ADP + H(+). It carries out the reaction N-hexadecanoylsphing-4-enine + ATP = N-(hexadecanoyl)-sphing-4-enine-1-phosphate + ADP + H(+). The enzyme catalyses N-hexanoyl-(4R)-hydroxysphinganine + ATP = N-hexanoyl-(4R)-hydroxysphinganine-1-phosphate + ADP + H(+). Its activity is regulated as follows. Inhibited by sulfatide. Inhibited by sphinganine, sphingenine, and N,N-Dimethylsphingosine (DMS). Cardiolipin at 0.1 uM significantly increases activity, whereas at concentrations &gt;1 uM has an inhibitory effect. Catalyzes specifically the phosphorylation of ceramide to form ceramide 1-phosphate. Acts efficiently on natural and analog ceramides (C6, C8, C16 ceramides, and C8-dihydroceramide), to a lesser extent on C2-ceramide and C6-dihydroceramide, but not on other lipids, such as various sphingosines. Shows a greater preference for D-erythro isomer of ceramides. Binds phosphoinositides. The sequence is that of Ceramide kinase (CERK) from Homo sapiens (Human).